The primary structure comprises 242 residues: 3-oxoacyl-[acyl-carrier-protein] reductase FabG (242 aa).

NADP(+)-binding positions include 9–12, arginine 34, 60–61, and asparagine 87; these read GSSR and DV. Serine 140 provides a ligand contact to substrate. Tyrosine 153 serves as the catalytic Proton acceptor. NADP(+) contacts are provided by residues 153-157 and isoleucine 186; that span reads YSASK.

The protein belongs to the short-chain dehydrogenases/reductases (SDR) family. Homotetramer.

The catalysed reaction is a (3R)-hydroxyacyl-[ACP] + NADP(+) = a 3-oxoacyl-[ACP] + NADPH + H(+). It functions in the pathway lipid metabolism; fatty acid biosynthesis. Catalyzes the NADPH-dependent reduction of beta-ketoacyl-ACP substrates to beta-hydroxyacyl-ACP products, the first reductive step in the elongation cycle of fatty acid biosynthesis. This Aggregatibacter actinomycetemcomitans (Actinobacillus actinomycetemcomitans) protein is 3-oxoacyl-[acyl-carrier-protein] reductase FabG (fabG).